A 130-amino-acid polypeptide reads, in one-letter code: Holo-[acyl-carrier-protein] synthase (130 aa).

The Mg(2+) site is built by Asp8 and Glu62.

Belongs to the P-Pant transferase superfamily. AcpS family. Mg(2+) is required as a cofactor.

It localises to the cytoplasm. The catalysed reaction is apo-[ACP] + CoA = holo-[ACP] + adenosine 3',5'-bisphosphate + H(+). Its function is as follows. Transfers the 4'-phosphopantetheine moiety from coenzyme A to a Ser of acyl-carrier-protein. This Polynucleobacter asymbioticus (strain DSM 18221 / CIP 109841 / QLW-P1DMWA-1) (Polynucleobacter necessarius subsp. asymbioticus) protein is Holo-[acyl-carrier-protein] synthase.